We begin with the raw amino-acid sequence, 598 residues long: UvrABC system protein C (598 aa).

Residues 14–91 (DSPGCYLHKD…IQKNMPKYNI (78 aa)) form the GIY-YIG domain. Residues 196 to 231 (DKIIEDLRSKMLAASEEMAFERAAEYRDLISGIATM) enclose the UVR domain.

This sequence belongs to the UvrC family. As to quaternary structure, interacts with UvrB in an incision complex.

Its subcellular location is the cytoplasm. Functionally, the UvrABC repair system catalyzes the recognition and processing of DNA lesions. UvrC both incises the 5' and 3' sides of the lesion. The N-terminal half is responsible for the 3' incision and the C-terminal half is responsible for the 5' incision. The sequence is that of UvrABC system protein C from Streptococcus pyogenes serotype M12 (strain MGAS2096).